The chain runs to 153 residues: Ubiquitin/ISG15-conjugating enzyme E2 L6 (153 aa).

The UBC core domain maps to Met-2 to Val-149. Cys-86 acts as the Glycyl thioester intermediate in catalysis.

It belongs to the ubiquitin-conjugating enzyme family. As to quaternary structure, interacts with RNF19A, RNF19B and RNF144B. Interacts with FLT3 (tyrosine phosphorylated). ISGylated.

It carries out the reaction S-ubiquitinyl-[E1 ubiquitin-activating enzyme]-L-cysteine + [E2 ubiquitin-conjugating enzyme]-L-cysteine = [E1 ubiquitin-activating enzyme]-L-cysteine + S-ubiquitinyl-[E2 ubiquitin-conjugating enzyme]-L-cysteine.. It participates in protein modification; protein ubiquitination. In terms of biological role, catalyzes the covalent attachment of ubiquitin or ISG15 to other proteins. Functions in the E6/E6-AP-induced ubiquitination of p53/TP53. Promotes ubiquitination and subsequent proteasomal degradation of FLT3. This Mus musculus (Mouse) protein is Ubiquitin/ISG15-conjugating enzyme E2 L6 (Ube2l6).